A 1086-amino-acid chain; its full sequence is NAD(P) transhydrogenase, mitochondrial (1086 aa).

The N-terminal 43 residues, 1–43 (MAHLLKTVVAGCSCPFLSNLGSSKVLPGKRDFVRTLRTHQALW), are a transit peptide targeting the mitochondrion. Topologically, residues 44 to 474 (CKSPVKPGIP…TVSMYTKTLT (431 aa)) are mitochondrial matrix. K70 carries the post-translational modification N6-acetyllysine. At K117 the chain carries N6-succinyllysine. Residue 182 to 184 (RVT) participates in NAD(+) binding. Position 224 is an N6-succinyllysine (K224). NAD(+)-binding positions include V237, 257 to 259 (DTR), and G287. N6-succinyllysine is present on K294. Residues E300 and L319 each coordinate NAD(+). Residue K331 is modified to N6-succinyllysine. The residue at position 397 (K397) is an N6-acetyllysine. 4 helical membrane-spanning segments follow: residues 475–493 (TASVYSAGLTGMLGLGIVA), 501–521 (MVTTFGLAGIIGYHTVWGVTP), 527–546 (LMSVTNAISGLTAVGGLALM), and 558–578 (SLAALATFISSVNIAGGFLVT). The Mitochondrial matrix portion of the chain corresponds to 579-595 (QRMLDMFKRPTDPPEYN). 5 helical membrane passes run 596 to 616 (YLYLLPGGTFVGGYLAALYGG), 622 to 642 (IMYLGSGLCCVGALGGLSTQG), 646 to 666 (LGNALGMIGVAGGLAATLGGL), 672 to 691 (LLAQMSGAMAMGGTIGLTIA), and 702 to 722 (LVAAFHSLVGLAAVLTCMAEY). Over 723-739 (IVEYPHFAMDATSNFTK) the chain is Cytoplasmic. 5 consecutive transmembrane segments (helical) span residues 740–760 (IVAYLGTYIGGVTFSGSLVAY), 778–797 (HALNAGLLAASVGGIIPFMA), 801–819 (FTTGITCLGSVSGLSTLMG), 833–853 (VVITVLNSYSGWALCAEGFLL), and 857–879 (LLTIVGALIGSSGAILSYIMCVA). The Mitochondrial matrix segment spans residues 880–1086 (MNRSLANVIL…QAKVRESYQK (207 aa)). NADP(+) contacts are provided by residues Y933, 965–970 (VAGRMP), 1007–1011 (GANDT), 1026–1027 (GM), 1042–1049 (KRSLGVGY), and 1068–1069 (DA). Position 1079 is an N6-succinyllysine (K1079).

The protein in the N-terminal section; belongs to the AlaDH/PNT family. It in the C-terminal section; belongs to the PNT beta subunit family. Homodimer. As to expression, widely expressed with expression most readily detectable in adrenal, heart, kidney, thyroid and adipose tissues.

The protein resides in the mitochondrion inner membrane. It catalyses the reaction NAD(+) + NADPH + H(+)(in) = NADH + NADP(+) + H(+)(out). Functionally, the transhydrogenation between NADH and NADP is coupled to respiration and ATP hydrolysis and functions as a proton pump across the membrane. May play a role in reactive oxygen species (ROS) detoxification in the adrenal gland. In Mus musculus (Mouse), this protein is NAD(P) transhydrogenase, mitochondrial (Nnt).